A 326-amino-acid polypeptide reads, in one-letter code: Target of rapamycin complex subunit LST8 (326 aa).

At M1 the chain carries N-acetylmethionine. WD repeat units follow at residues 1–37 (MNTT…CTRT), 40–80 (HQDS…PIIS), 83–122 (GVSK…LQCQ), 126–165 (QVNA…NEQL), and 168–207 (EPEF…GDEV). Phosphothreonine is present on T51. K86 is covalently cross-linked (Glycyl lysine isopeptide (Lys-Gly) (interchain with G-Cter in SUMO3)). Glycyl lysine isopeptide (Lys-Gly) (interchain with G-Cter in SUMO3) cross-links involve residues K215, K245, and K261. Residues 218-257 (AHTRYALQCRFSPDSTLLATCSADQTCKIWRTSNFSLMTE) form a WD 6 repeat. One copy of the WD 7 repeat lies at 268–309 (SSRGWMWGCAFSGDSQYIVTASSDNLARLWCVETGEIKREYG). A Glycyl lysine isopeptide (Lys-Gly) (interchain with G-Cter in SUMO3); alternate cross-link involves residue K305. Glycyl lysine isopeptide (Lys-Gly) (interchain with G-Cter in ubiquitin); alternate cross-links involve residues K305 and K313. A Glycyl lysine isopeptide (Lys-Gly) (interchain with G-Cter in SUMO1); alternate cross-link involves residue K313.

Belongs to the WD repeat LST8 family. Part of the mechanistic target of rapamycin complex 1 (mTORC1) which contains MTOR, MLST8 and RPTOR. mTORC1 associates with AKT1S1/PRAS40, which inhibits its activity. mTORC1 binds to and is inhibited by FKBP12-rapamycin. Within mTORC1, interacts directly with MTOR and RPTOR. Component of the mechanistic target of rapamycin complex 2 (mTORC2), consisting in two heterotretramers composed of MTOR, MLST8, RICTOR and MAPKAP1/SIN1. Contrary to mTORC1, mTORC2 does not bind to and is not sensitive to FKBP12-rapamycin. mTORC1 and mTORC2 associate with DEPTOR, which regulates their activity. Interacts with RHEB. Interacts with MEAK7. Interacts with SIK3. Interacts with SLC38A7; this interaction promotes the recruitment of mTORC1 to the lysosome and its subsequent activation. Phosphorylation at Thr-51 by CDK1 promotes ubiquitination by the SCF(FBXW7) complex, followed by degradation. In terms of processing, ubiquitination by the SCF(FBXW7) and SCF(FBXW11) complexes following phosphorylation at Thr-51 by CDK1, leads to its degradation by the proteasome. Ubiquitination at Lys-305 and Lys-313 by TRAF2 via 'Lys-63'-linked polyubiquitin chains inhibits formation of the mTORC2 complex, while promoting formation of the mTORC1 complex: ubiquitination disrupts the interaction between MLST8 and MAPKAP1/SIN1 to favor mTORC1 assembly. Deubiquitination at Lys-305 and Lys-313 by OTUD7B promotes MLST8 interaction with MAPKAP1/SIN1, facilitating mTORC2 assembly. Post-translationally, sumoylation with SUMO1, SUMO2 and SUMO3 promotes assembly of both mTORC1 and mTORC2 complexes. As to expression, expressed at highest levels in the brain and testis, followed by lung, heart, kidney, skeletal muscle, spleen and liver. Also expressed in epididymal, abdominal and brown fat, small intestine and pancreas.

It localises to the lysosome membrane. It is found in the cytoplasm. Subunit of both mTORC1 and mTORC2, which regulates cell growth and survival in response to nutrient and hormonal signals. mTORC1 is activated in response to growth factors or amino acids. In response to nutrients, mTORC1 is recruited to the lysosome membrane and promotes protein, lipid and nucleotide synthesis by phosphorylating several substrates, such as ribosomal protein S6 kinase (RPS6KB1 and RPS6KB2) and EIF4EBP1 (4E-BP1). In the same time, it inhibits catabolic pathways by phosphorylating the autophagy initiation components ULK1 and ATG13, as well as transcription factor TFEB, a master regulators of lysosomal biogenesis and autophagy. The mTORC1 complex is inhibited in response to starvation and amino acid depletion. Within mTORC1, MLST8 interacts directly with MTOR and enhances its kinase activity. In nutrient-poor conditions, stabilizes the MTOR-RPTOR interaction and favors RPTOR-mediated inhibition of MTOR activity. As part of the mTORC2 complex, transduces signals from growth factors to pathways involved in proliferation, cytoskeletal organization, lipogenesis and anabolic output. mTORC2 is also activated by growth factors, but seems to be nutrient-insensitive. In response to growth factors, mTORC2 phosphorylates and activates AGC protein kinase family members, including AKT (AKT1, AKT2 and AKT3), PKC (PRKCA, PRKCB and PRKCE) and SGK1. mTORC2 functions upstream of Rho GTPases to regulate the actin cytoskeleton, probably by activating one or more Rho-type guanine nucleotide exchange factors. mTORC2 promotes the serum-induced formation of stress-fibers or F-actin. mTORC2 plays a critical role in AKT1 activation by mediating phosphorylation of different sites depending on the context, such as 'Thr-450', 'Ser-473', 'Ser-477' or 'Thr-479', facilitating the phosphorylation of the activation loop of AKT1 on 'Thr-308' by PDPK1/PDK1 which is a prerequisite for full activation. mTORC2 regulates the phosphorylation of SGK1 at 'Ser-422'. mTORC2 also modulates the phosphorylation of PRKCA on 'Ser-657'. Within mTORC2, MLST8 acts as a bridge between MAPKAP1/SIN1 and MTOR. This Rattus norvegicus (Rat) protein is Target of rapamycin complex subunit LST8.